The primary structure comprises 70 residues: Frenatin 4.1 (70 aa).

Residues 1 to 22 (MAFLKKSLFLVLFLGLVNLSIC) form the signal peptide. Positions 23–46 (EEEKREEENKEEEDENEALSEVKR) are excised as a propeptide. Residue Lys-68 is modified to Lysine amide.

This sequence belongs to the frog skin active peptide (FSAP) family. Frenatin subfamily. In terms of tissue distribution, expressed by the skin glands.

Its subcellular location is the secreted. The protein resides in the target cell membrane. Functionally, peptide with unknown function. Does not show antimicrobial activity against S.aureus (MIC&gt;512 ug/mL), E.coli (MIC&gt;512 ug/mL) and C.albicans (MIC&gt;512 ug/mL). Does not show hemolytic activity. In terms of biological role, antimicrobial peptide with activity against E.coli (MIC=128 ug/mL or 54 uM) and C.albicans (MIC=256 ug/mL or 108 uM). Does not show activity against S.aureus (MIC&gt;512 ug/mL). Does not show hemolytic activity. This is Frenatin 4.1 from Nyctimystes infrafrenatus (White-lipped tree frog).